The chain runs to 239 residues: Small ribosomal subunit protein eS4 (239 aa).

The 63-residue stretch at 37-99 (IPLAVVIRDY…ADLYFRVIPD (63 aa)) folds into the S4 RNA-binding domain.

It belongs to the eukaryotic ribosomal protein eS4 family.

In Saccharolobus islandicus (strain Y.N.15.51 / Yellowstone #2) (Sulfolobus islandicus), this protein is Small ribosomal subunit protein eS4.